An 845-amino-acid chain; its full sequence is Ribonucleoside-diphosphate reductase subunit alpha (845 aa).

Residues 1-98 (MHIIKRNGEP…LYRDDRTKKR (98 aa)) enclose the ATP-cone domain. Residues Thr-303, 318 to 319 (SC), Gly-347, 534 to 538 (NLCTE), and 725 to 729 (PTSST) contribute to the substrate site. The cysteines at positions 319 and 574 are disulfide-linked. The Proton acceptor role is filled by Asn-534. The Cysteine radical intermediate role is filled by Cys-536. The active-site Proton acceptor is the Glu-538.

The protein belongs to the ribonucleoside diphosphate reductase large chain family. In terms of assembly, tetramer of two alpha and two beta subunits.

The enzyme catalyses a 2'-deoxyribonucleoside 5'-diphosphate + [thioredoxin]-disulfide + H2O = a ribonucleoside 5'-diphosphate + [thioredoxin]-dithiol. With respect to regulation, under complex allosteric control mediated by deoxynucleoside triphosphates and ATP binding. The type of nucleotide bound at the specificity site determines substrate preference. It seems probable that ATP makes the enzyme reduce CDP and UDP, dGTP favors ADP reduction and dTTP favors GDP reduction. Provides the precursors necessary for DNA synthesis. Catalyzes the biosynthesis of deoxyribonucleotides from the corresponding ribonucleotides. The protein is Ribonucleoside-diphosphate reductase subunit alpha (nrdA) of Treponema pallidum (strain Nichols).